Reading from the N-terminus, the 410-residue chain is Maintenance of mitochondrial morphology protein 1 (410 aa).

The Lumenal segment spans residues 1–19; the sequence is MTPDSCPVRPEPTLSFTQG. The helical transmembrane segment at 20–40 threads the bilayer; the sequence is LIVGQISVVFLIAAFIKFFIF. The Cytoplasmic segment spans residues 41-410; the sequence is GDPPSAEETA…PMPGSLAVDD (370 aa). Residues 71–87 show a composition bias toward polar residues; sequence LRTSNQRPGSQQQQSVL. The disordered stretch occupies residues 71–98; the sequence is LRTSNQRPGSQQQQSVLNRKKSSILRSG. The SMP-LTD domain occupies 119–335; the sequence is QPESLDWFNV…EPRFQEIPLP (217 aa). The tract at residues 380 to 410 is disordered; it reads ARQAAQRDSLRYRRPRADDAFPMPGSLAVDD. Residues 387–398 show a composition bias toward basic and acidic residues; sequence DSLRYRRPRADD.

It belongs to the MMM1 family. As to quaternary structure, homodimer. Component of the ER-mitochondria encounter structure (ERMES) or MDM complex, composed of MMM1, MDM10, MDM12 and MDM34. An MMM1 homodimer associates with one molecule of MDM12 on each side in a pairwise head-to-tail manner, and the SMP-LTD domains of MMM1 and MDM12 generate a continuous hydrophobic tunnel for phospholipid trafficking.

Its subcellular location is the endoplasmic reticulum membrane. Component of the ERMES/MDM complex, which serves as a molecular tether to connect the endoplasmic reticulum (ER) and mitochondria. Components of this complex are involved in the control of mitochondrial shape and protein biogenesis, and function in nonvesicular lipid trafficking between the ER and mitochondria. The MDM12-MMM1 subcomplex functions in the major beta-barrel assembly pathway that is responsible for biogenesis of all outer membrane beta-barrel proteins, and acts in a late step after the SAM complex. The MDM10-MDM12-MMM1 subcomplex further acts in the TOM40-specific pathway after the action of the MDM12-MMM1 complex. Essential for establishing and maintaining the structure of mitochondria and maintenance of mtDNA nucleoids. The chain is Maintenance of mitochondrial morphology protein 1 from Pyricularia oryzae (strain 70-15 / ATCC MYA-4617 / FGSC 8958) (Rice blast fungus).